The primary structure comprises 535 residues: Calcium-dependent protein kinase 5 (535 aa).

The tract at residues 1-46 (MGNACRGSFGGKTFQGYPQPQDHSESNSNPKHNSDSPKPKKEQQPL) is disordered. Residue Gly2 is the site of N-myristoyl glycine attachment. Residue Cys5 is the site of S-palmitoyl cysteine attachment. The span at 32–43 (HNSDSPKPKKEQ) shows a compositional bias: basic and acidic residues. Positions 72–330 (YTLGRKLGQG…AHEVLCHPWI (259 aa)) constitute a Protein kinase domain. ATP-binding positions include 78-86 (LGQGQFGTT) and Lys101. The active-site Proton acceptor is the Asp196. The tract at residues 336 to 366 (APDRALDPAVLSRLKHFSAMNKLKKMALRVI) is autoinhibitory domain. 4 EF-hand domains span residues 373–408 (EEIAGLKEMFKAMDTDNSGAITFDELKAGLRKYGST), 409–444 (LKDIEIRELMDAADVDNSGTIDYGEFIAATIHLNKL), 445–480 (DREEHLMAAFQYFDKDGSGYITVDELQQACADHNIT), and 484–514 (FEDIIREVDQDNDGRIDYGEFVAMMQKGNPC). Asp386, Asp388, Ser390, Glu397, Asp422, Asp424, Ser426, Thr428, Glu433, Asp458, Asp460, Ser462, Tyr464, Glu469, Asp492, Asp494, Asp496, Arg498, and Glu503 together coordinate Ca(2+).

This sequence belongs to the protein kinase superfamily. Ser/Thr protein kinase family. CDPK subfamily.

Its subcellular location is the cell membrane. The enzyme catalyses L-seryl-[protein] + ATP = O-phospho-L-seryl-[protein] + ADP + H(+). The catalysed reaction is L-threonyl-[protein] + ATP = O-phospho-L-threonyl-[protein] + ADP + H(+). Activated by calcium. Autophosphorylation may play an important role in the regulation of the kinase activity. Functionally, regulates the production of reactive oxygen species (ROS) by NADPH oxidase. This is Calcium-dependent protein kinase 5 (CPK5) from Solanum tuberosum (Potato).